The primary structure comprises 147 residues: MKTKICIITGSTLGGAEYVAEHIAEILEQQDYPVRLEHGPNFEEVIDEKCWLVVTSTHGAGELPDNIKPLFEKLAFHPKQLADLRFAVIGLGNSDYDTFCHAVDHVEQLLLSKDALQLCESLRMDMLTITDPEHTAEQWLPQFLSQL.

The Flavodoxin-like domain maps to 5–144; that stretch reads ICIITGSTLG…TAEQWLPQFL (140 aa).

Belongs to the flavodoxin family. MioC subfamily. FMN is required as a cofactor.

Probable electron transporter required for biotin synthase activity. In Pasteurella multocida (strain Pm70), this protein is Protein MioC homolog (mioC).